The following is a 157-amino-acid chain: Protein GrpE (157 aa).

The span at 1 to 10 (MQEENQHPEQ) shows a compositional bias: basic and acidic residues. The disordered stretch occupies residues 1–21 (MQEENQHPEQDDISEAQDAGA).

It belongs to the GrpE family. Homodimer.

The protein resides in the cytoplasm. Its function is as follows. Participates actively in the response to hyperosmotic and heat shock by preventing the aggregation of stress-denatured proteins, in association with DnaK and GrpE. It is the nucleotide exchange factor for DnaK and may function as a thermosensor. Unfolded proteins bind initially to DnaJ; upon interaction with the DnaJ-bound protein, DnaK hydrolyzes its bound ATP, resulting in the formation of a stable complex. GrpE releases ADP from DnaK; ATP binding to DnaK triggers the release of the substrate protein, thus completing the reaction cycle. Several rounds of ATP-dependent interactions between DnaJ, DnaK and GrpE are required for fully efficient folding. The polypeptide is Protein GrpE (Methylovorus sp. (strain SS1 / DSM 11726)).